A 670-amino-acid polypeptide reads, in one-letter code: Protein angel homolog 1 (670 aa).

Phosphoserine is present on residues S77 and S105.

It belongs to the CCR4/nocturin family.

The sequence is that of Protein angel homolog 1 (ANGEL1) from Homo sapiens (Human).